A 780-amino-acid chain; its full sequence is MGSGGVIHCRCAKCFCYPTKRRIKRRPRNLTILSLPEDVLFHILKWLSVGDILAVRAVHSHLKYLVDNHASVWASASFQELWPSPQNLKLFERAAEKGNFEAAVKLGIAYLYNEGLSVSDEACAEVNGLKASRFFSMAERLNTGSDPFIWLFIRPPWSVSGSCCKAVVHDSLRAECQLQRSHKASILHCLGRVLNLFEDEEKRKQAHNLFEESAHQGCLASSYLLWESDRKVDMSDPGRCLHSFRKLRDYAAKGCWEAQLALAKACAGGSQLGLEGKACSESVCQLFQASQAVNKQQIFSVQKGLSDTMRYILIDWLVEVATMKDFTSLCLHLTVECVDRYLRRRLVPRYKLQLLGIACMVICTRFISKEILTIREAVWLTDNTYKYEDLVRVMGEIISALEGKIRIPTVVDYKEVLLTLVPVAPRTQHLCSFLCELTLLHTSLSVYAPARLASAALLLARLMHGHTQPWTTQLWDLTGFSYSDLTPCVLSLHKKCFHDDAPKDYRQVSLTAVKQRFEDKCYEEISQEEVLSYAELCSALGVKQESPEPPSFPSSGEIHTFLSSPSGRRSKRKRENSLQEDRGSFVTTPTAELSNQEETLLGSLLDWSLDCCSGYEGDQESEGEKEGDVTAPSGLLDVTVVYLNPEEHCCQESSDEEVWPEDKSHPTPGTQAPPASAPWPLPCNRGDPGKDVTTSGYSSVSSSSPISSLDGGMVGSPRSTSVLSVGSHSSTKPCYHQAKKSCLQCRPPNPPESGAHQQPVKRQNLSVHSDEDTNLGFLKL.

The Nuclear localization signal 1 signature appears at 20 to 28 (KRRIKRRPR). An F-box domain is found at 29 to 76 (NLTILSLPEDVLFHILKWLSVGDILAVRAVHSHLKYLVDNHASVWASA). The 118-residue stretch at 288–405 (QASQAVNKQQ…EIISALEGKI (118 aa)) folds into the Cyclin N-terminal domain. 3 short sequence motifs (d box) span residues 310–313 (RYIL), 343–346 (RRRL), and 349–352 (RYKL). 3 disordered regions span residues 544–594 (QESP…AELS), 651–733 (QESS…STKP), and 745–780 (CRPPNPPESGAHQQPVKRQNLSVHSDEDTNLGFLKL). A Nuclear localization signal 2 motif is present at residues 568-574 (RRSKRKR). The tract at residues 582–761 (RGSFVTTPTA…ESGAHQQPVK (180 aa)) is PEST. A compositionally biased stretch (polar residues) spans 585–594 (FVTTPTAELS). Low complexity-rich tracts occupy residues 695–708 (SGYSSVSSSSPISS) and 719–731 (STSVLSVGSHSST). The short motif at 762–765 (RQNL) is the D box 4 element.

Belongs to the cyclin family. Cyclin AB subfamily. In terms of assembly, component of the SCF(CCNF) complex consisting of CUL1, RBX1, SKP1 and CCNF. Interacts with SKP1. Interacts with CUL1. Interacts with CCNB1; interaction is required for nuclear localization of CCNB1. Interacts with CCP110; this interaction leads to CCP110 ubiquitination and degradation via the proteasome pathway. Interacts (via the Cyclin N-terminal domain) with MYBL2/BMYB. Interacts with FZR1/CDH1 (via N-terminus). Interacts with RRM2 (via Cy motif and when phosphorylated at 'Thr-33'); the interaction occurs exclusively in G2 and early M. Interacts with CDC6 (via Cy motif); the interaction takes place during G2 and M phase. Degraded when the spindle assembly checkpoint is activated during the G2-M transition. Degradation is not dependent on the proteasome or ubiquitin and depends on the C-terminal PEST sequence. In terms of processing, phosphorylated just before cells enter into mitosis. Post-translationally, ubiquitinated by the anaphase-promoting complex (APC/C); leading to its degradation by the proteasome.

It localises to the nucleus. The protein localises to the cytoplasm. The protein resides in the perinuclear region. It is found in the cytoskeleton. Its subcellular location is the microtubule organizing center. It localises to the centrosome. The protein localises to the centriole. Functionally, substrate recognition component of a SCF (SKP1-CUL1-F-box protein) E3 ubiquitin-protein ligase complex which mediates the ubiquitination and subsequent proteasomal degradation of target proteins. The SCF(CCNF) E3 ubiquitin-protein ligase complex is an integral component of the ubiquitin proteasome system (UPS) and links proteasome degradation to the cell cycle. Mediates the substrate recognition and the proteasomal degradation of various target proteins involved in the regulation of cell cycle progression and in the maintenance of genome stability. Mediates the ubiquitination and subsequent proteasomal degradation of CP110 during G2 phase, thereby acting as an inhibitor of centrosome reduplication. In G2, mediates the ubiquitination and proteasomal degradation of CDC6, thereby suppressing DNA re-replication and preventing genome instability. Involved in the ubiquitination and degradation of the substrate adapter CDH1 of the anaphase-promoting complex (APC/C), thereby acting as an antagonist of APC/C in regulating G1 progression and S phase entry. May play a role in the G2 cell cycle checkpoint control after DNA damage, possibly by promoting the ubiquitination of MYBL2/BMYB. In Rattus norvegicus (Rat), this protein is Cyclin-F (Ccnf).